Reading from the N-terminus, the 288-residue chain is Bifunctional protein FolD (288 aa).

NADP(+)-binding positions include 166–168 (GRS), serine 191, and isoleucine 232.

It belongs to the tetrahydrofolate dehydrogenase/cyclohydrolase family. In terms of assembly, homodimer.

The catalysed reaction is (6R)-5,10-methylene-5,6,7,8-tetrahydrofolate + NADP(+) = (6R)-5,10-methenyltetrahydrofolate + NADPH. It catalyses the reaction (6R)-5,10-methenyltetrahydrofolate + H2O = (6R)-10-formyltetrahydrofolate + H(+). It participates in one-carbon metabolism; tetrahydrofolate interconversion. Catalyzes the oxidation of 5,10-methylenetetrahydrofolate to 5,10-methenyltetrahydrofolate and then the hydrolysis of 5,10-methenyltetrahydrofolate to 10-formyltetrahydrofolate. This Rickettsia peacockii (strain Rustic) protein is Bifunctional protein FolD.